The primary structure comprises 308 residues: Zinc transporter ZIP9 (308 aa).

A helical transmembrane segment spans residues 4 to 24; that stretch reads FLSISLLSVAMLVGCYVAGII. N-linked (GlcNAc...) asparagine glycosylation is present at asparagine 29. Helical transmembrane passes span 35-55, 107-127, 147-167, 177-197, and 211-231; these read LKLV…AVIV, AYIG…DQIG, ITTT…LGAA, LIVF…LVSF, and HLLV…LGLS. An N-linked (GlcNAc...) asparagine glycan is attached at asparagine 242. 2 helical membrane-spanning segments follow: residues 245–265 and 287–307; these read GVAM…HVLP and LEVA…IGHQ.

The protein belongs to the ZIP transporter (TC 2.A.5) family.

It is found in the golgi apparatus. It localises to the trans-Golgi network membrane. The protein resides in the cell membrane. The protein localises to the cytoplasm. Its subcellular location is the perinuclear region. It is found in the mitochondrion. It localises to the nucleus. It carries out the reaction Zn(2+)(in) = Zn(2+)(out). Transports zinc ions across cell and organelle membranes into the cytoplasm and regulates intracellular zinc homeostasis. Participates in the zinc ions efflux out of the secretory compartments. Regulates intracellular zinc level, resulting in the enhancement of AKT1 and MAPK3/MAPK1 (Erk1/2) phosphorylation in response to the BCR activation. Also functions as a membrane androgen receptor that mediates, through a G protein, the non-classical androgen signaling pathway, characterized by the activation of MAPK3/MAPK1 (Erk1/2) and transcription factors CREB1 or ATF1. This pathway contributes to CLDN1 and CLDN5 expression and tight junction formation between adjacent Sertoli cells. Mediates androgen-induced vascular endothelial cell proliferation through activation of an inhibitory G protein leading to the AKT1 and MAPK3/MAPK1 (Erk1/2) activation which in turn modulate inhibition (phosphorylation) of GSK3B and CCND1 transcription. Moreover, has dual functions as a membrane-bound androgen receptor and as an androgen-dependent zinc transporter both of which are mediated through an inhibitory G protein (Gi) that mediates both MAP kinase and zinc signaling leading to the androgen-dependent apoptotic process. In Mus musculus (Mouse), this protein is Zinc transporter ZIP9.